A 66-amino-acid chain; its full sequence is GRDAYIAQNYNCVYHCFRDDYCNGLCTENGADSGYCYLAGKYGHACWCINLPDDKPIRIPGKCHRR.

Positions 2 to 64 constitute an LCN-type CS-alpha/beta domain; the sequence is RDAYIAQNYN…KPIRIPGKCH (63 aa). Disulfide bonds link cysteine 12–cysteine 63, cysteine 16–cysteine 36, cysteine 22–cysteine 46, and cysteine 26–cysteine 48. The propeptide at 65 to 66 is removed by a carboxypeptidase; the sequence is RR.

As to expression, expressed by the venom gland.

It is found in the secreted. Its function is as follows. Alpha toxins bind voltage-independently at site-3 of sodium channels (Nav) and inhibit the inactivation of the activated channels, thereby blocking neuronal transmission. This toxin has a strong analgesic effect when administered to mice by intraperitoneal injection. This chain is Neurotoxin BmK AGP-SYPU1, found in Olivierus martensii (Manchurian scorpion).